A 132-amino-acid polypeptide reads, in one-letter code: Small ribosomal subunit protein uS8 (132 aa).

It belongs to the universal ribosomal protein uS8 family. In terms of assembly, part of the 30S ribosomal subunit. Contacts proteins S5 and S12.

Functionally, one of the primary rRNA binding proteins, it binds directly to 16S rRNA central domain where it helps coordinate assembly of the platform of the 30S subunit. This Leptospira biflexa serovar Patoc (strain Patoc 1 / Ames) protein is Small ribosomal subunit protein uS8.